The chain runs to 469 residues: UDP-N-acetylmuramate--L-alanine ligase (469 aa).

Position 122 to 128 (122 to 128 (GTHGKTT)) interacts with ATP.

This sequence belongs to the MurCDEF family.

The protein localises to the cytoplasm. It catalyses the reaction UDP-N-acetyl-alpha-D-muramate + L-alanine + ATP = UDP-N-acetyl-alpha-D-muramoyl-L-alanine + ADP + phosphate + H(+). It functions in the pathway cell wall biogenesis; peptidoglycan biosynthesis. Functionally, cell wall formation. The sequence is that of UDP-N-acetylmuramate--L-alanine ligase from Legionella pneumophila subsp. pneumophila (strain Philadelphia 1 / ATCC 33152 / DSM 7513).